Here is a 687-residue protein sequence, read N- to C-terminus: DNA-directed RNA polymerase subunit beta' (687 aa).

Zn(2+)-binding residues include Cys69, Cys71, Cys87, and Cys90. Residues Asp495, Asp497, and Asp499 each contribute to the Mg(2+) site.

The protein belongs to the RNA polymerase beta' chain family. RpoC1 subfamily. As to quaternary structure, in plastids the minimal PEP RNA polymerase catalytic core is composed of four subunits: alpha, beta, beta', and beta''. When a (nuclear-encoded) sigma factor is associated with the core the holoenzyme is formed, which can initiate transcription. Mg(2+) serves as cofactor. Zn(2+) is required as a cofactor.

The protein resides in the plastid. The protein localises to the chloroplast. The catalysed reaction is RNA(n) + a ribonucleoside 5'-triphosphate = RNA(n+1) + diphosphate. Its function is as follows. DNA-dependent RNA polymerase catalyzes the transcription of DNA into RNA using the four ribonucleoside triphosphates as substrates. In Solanum tuberosum (Potato), this protein is DNA-directed RNA polymerase subunit beta'.